Reading from the N-terminus, the 359-residue chain is MAEFVRAQIFGTTFEITSRYTDLQPVGMGAFGLVCSAKDQLTSQAVAVKKIMKPFSTPVLSKRTYRELKLLKHLRHENIICLSDIFISPLEDMYVVTELLGTDLHRLLTSRPLEKQFIQYFLYQILRGLKYVHSAGVVHRDLKPSNILINENCDLKICDFGLARIQDPQMTGYVSTRYYRAPEIMLTWQKYDVEVDIWSAGCIFAEMLEGKPLFPGKDHVNQFSIITELLGTPPDDVIATICSENTLRFVQSLPKRERQPLKNKFKNADPQAIELLERMLVFDPRKRVKAGEALADPYLAPYHDPTDEPEAQEKFDWSFNDADLPVDTWKIMMYSEILDFHNVDANAEQAAHNNDTVAG.

In terms of domain architecture, Protein kinase spans Y20–L299. Residues V26 to V34 and K49 contribute to the ATP site. D141 serves as the catalytic Proton acceptor. T171 carries the post-translational modification Phosphothreonine. Positions T171–Y173 match the TXY motif. Y173 carries the phosphotyrosine modification.

This sequence belongs to the protein kinase superfamily. Ser/Thr protein kinase family. MAP kinase subfamily. HOG1 sub-subfamily. Requires Mg(2+) as cofactor. Dually phosphorylated on Thr-171 and Tyr-173, which activates the enzyme.

Its subcellular location is the cytoplasm. The protein localises to the nucleus. It carries out the reaction L-seryl-[protein] + ATP = O-phospho-L-seryl-[protein] + ADP + H(+). The enzyme catalyses L-threonyl-[protein] + ATP = O-phospho-L-threonyl-[protein] + ADP + H(+). Activated by tyrosine and threonine phosphorylation. In terms of biological role, proline-directed serine/threonine-protein kinase involved in a signal transduction pathway that is activated by changes in the osmolarity of the extracellular environment. Controls osmotic regulation of transcription of target genes. The chain is Mitogen-activated protein kinase HOG1 (HOG1) from Hortaea werneckii.